Reading from the N-terminus, the 418-residue chain is Putative FBD-associated F-box protein At5g56560 (418 aa).

Residues 4-60 (QTRLSDLPDELLLKILSALPMFKVTLATRLISRRWKGPWKLVPDVTFDDDDIPFKSF) enclose the F-box domain. The FBD domain maps to 340-390 (LWEEPAVVAKCLSEHLEIFEWRQYEGTEQERNVAGYILANATCLKMATFST).

This chain is Putative FBD-associated F-box protein At5g56560, found in Arabidopsis thaliana (Mouse-ear cress).